The chain runs to 120 residues: Peptidyl-tRNA hydrolase (120 aa).

Belongs to the PTH2 family. In terms of assembly, homodimer.

It is found in the cytoplasm. The enzyme catalyses an N-acyl-L-alpha-aminoacyl-tRNA + H2O = an N-acyl-L-amino acid + a tRNA + H(+). In terms of biological role, the natural substrate for this enzyme may be peptidyl-tRNAs which drop off the ribosome during protein synthesis. The chain is Peptidyl-tRNA hydrolase from Saccharolobus solfataricus (strain ATCC 35092 / DSM 1617 / JCM 11322 / P2) (Sulfolobus solfataricus).